A 101-amino-acid chain; its full sequence is MRGNVPQLKDVVLHLTPQTEIDLQCYEQFDSSEEEDEVDNMRDQLPERRAGQATCYRIEAPCCRCSSVVQLAVESSGDTLRVVQQMLMGELSLVCPCCANN.

The tract at residues 1–43 (MRGNVPQLKDVVLHLTPQTEIDLQCYEQFDSSEEEDEVDNMRD) is E7 terminal domain. The LXCXE motif; interaction with host RB1 and TMEM173/STING signature appears at 23–27 (LQCYE). Residues 62-98 (CCRCSSVVQLAVESSGDTLRVVQQMLMGELSLVCPCC) fold into a zinc finger. A Nuclear export signal motif is present at residues 80–88 (LRVVQQMLM).

It belongs to the papillomaviridae E7 protein family. In terms of assembly, homodimer. Homooligomer. Interacts with host RB1; this interaction induces dissociation of RB1-E2F1 complex thereby disrupting RB1 activity. Interacts with host EP300; this interaction represses EP300 transcriptional activity. Interacts with protein E2; this interaction inhibits E7 oncogenic activity. Interacts with host TMEM173/STING; this interaction impairs the ability of TMEM173/STING to sense cytosolic DNA and promote the production of type I interferon (IFN-alpha and IFN-beta). Post-translationally, highly phosphorylated.

Its subcellular location is the host cytoplasm. It is found in the host nucleus. Functionally, plays a role in viral genome replication by driving entry of quiescent cells into the cell cycle. Stimulation of progression from G1 to S phase allows the virus to efficiently use the cellular DNA replicating machinery to achieve viral genome replication. E7 protein has both transforming and trans-activating activities. Induces the disassembly of the E2F1 transcription factor from RB1, with subsequent transcriptional activation of E2F1-regulated S-phase genes. Interferes with host histone deacetylation mediated by HDAC1 and HDAC2, leading to transcription activation. Also plays a role in the inhibition of both antiviral and antiproliferative functions of host interferon alpha. Interaction with host TMEM173/STING impairs the ability of TMEM173/STING to sense cytosolic DNA and promote the production of type I interferon (IFN-alpha and IFN-beta). The sequence is that of Protein E7 from Homo sapiens (Human).